We begin with the raw amino-acid sequence, 190 residues long: Subtilisin inhibitor CLSI-II (190 aa).

Cystine bridges form between Cys-44/Cys-88 and Cys-142/Cys-149.

This sequence belongs to the protease inhibitor I3 (leguminous Kunitz-type inhibitor) family. Forms active dimers on storage in aqueous solution, possibly through formation of an intermolecular disulfide bond. Post-translationally, the N-terminal Asn is removed in about 50% of both the CLSI-II and CLSI-III chains.

It is found in the secreted. In terms of biological role, inhibits subtilisin-type microbial serine proteases incuding proteinase K, subtilisin BPN', subtilisin Carlsberg and subtilisin E in a non-stoichiometric manner. Weakly inhibits A.oryzae protease and some metalloproteases including pronase E. Does not inhibit trypsin, chymotrypsin, S.griseus alkaline protease or A.lyticus lysyl endopeptidase. CLSI-II has a wider inhibitory specificity than CLSI-III. The polypeptide is Subtilisin inhibitor CLSI-II (Canavalia lineata (Beach bean)).